We begin with the raw amino-acid sequence, 406 residues long: GTPase Obg (406 aa).

The region spanning 1 to 159 (MKFVDEVSIH…RDLKLELKVL (159 aa)) is the Obg domain. The segment at 127-148 (NTRFKSSTNRAPRQTTPGKPGE) is disordered. A compositionally biased stretch (polar residues) spans 129–143 (RFKSSTNRAPRQTTP). In terms of domain architecture, OBG-type G spans 160–334 (ADVGLLGLPN…LSQDIMRYLD (175 aa)). GTP contacts are provided by residues 166 to 173 (GLPNAGKS), 191 to 195 (FTTLV), 213 to 216 (DIPG), 283 to 286 (NKMD), and 315 to 317 (SAL). Residues Ser-173 and Thr-193 each coordinate Mg(2+). The disordered stretch occupies residues 382 to 406 (AGAVDDDDFDDEEDDGDGPEIFYVP). Residues 385–399 (VDDDDFDDEEDDGDG) show a composition bias toward acidic residues.

This sequence belongs to the TRAFAC class OBG-HflX-like GTPase superfamily. OBG GTPase family. In terms of assembly, monomer. It depends on Mg(2+) as a cofactor.

The protein resides in the cytoplasm. Functionally, an essential GTPase which binds GTP, GDP and possibly (p)ppGpp with moderate affinity, with high nucleotide exchange rates and a fairly low GTP hydrolysis rate. Plays a role in control of the cell cycle, stress response, ribosome biogenesis and in those bacteria that undergo differentiation, in morphogenesis control. This chain is GTPase Obg, found in Pseudomonas aeruginosa (strain LESB58).